A 201-amino-acid chain; its full sequence is Small ribosomal subunit protein uS4c (201 aa).

The 64-residue stretch at 89–152 (MRLDNILFRL…NSRTLVQNLL (64 aa)) folds into the S4 RNA-binding domain.

Belongs to the universal ribosomal protein uS4 family. In terms of assembly, part of the 30S ribosomal subunit. Contacts protein S5. The interaction surface between S4 and S5 is involved in control of translational fidelity.

Its subcellular location is the plastid. The protein localises to the chloroplast. One of the primary rRNA binding proteins, it binds directly to 16S rRNA where it nucleates assembly of the body of the 30S subunit. Functionally, with S5 and S12 plays an important role in translational accuracy. The sequence is that of Small ribosomal subunit protein uS4c (rps4) from Arabidopsis thaliana (Mouse-ear cress).